Reading from the N-terminus, the 678-residue chain is Secretin ExeD (678 aa).

Positions 1–25 (MINKGKSWRLATVAAALMMAGSAWA) are cleaved as a signal peptide. The segment at 26-122 (TEYSASFKNA…VVDETNPGIG (97 aa)) is N0. The interval 124–188 (EMVTRVVPVR…EVVRRVDKAG (65 aa)) is N1. The N2 stretch occupies residues 189–264 (DQEVDIIKLR…MVRQLDRDLQ (76 aa)). Residues 267–347 (GNTRVFYLKY…ELEQVVAKLD (81 aa)) form an N3 region. Positions 352–602 (QVLVEAIIVE…VFIRPTILRD (251 aa)) are secretin. The segment at 604 to 678 (HVYSGISSNK…GAQPFVQGNK (75 aa)) is s domain.

The protein belongs to the bacterial secretin family. GSP D subfamily. In terms of assembly, forms a cylindrical channel with 15 subunits.

Its subcellular location is the cell outer membrane. Its function is as follows. Involved in a type II secretion system (T2SS, formerly general secretion pathway, GSP) for the export of proteins. This subunit forms the outer membrane channel. This chain is Secretin ExeD (exeD), found in Aeromonas salmonicida.